We begin with the raw amino-acid sequence, 529 residues long: AT hook-containing protein attf-4 (529 aa).

Disordered stretches follow at residues 1-39 (MLQP…MEDD), 131-158 (QVVH…KPIE), 173-200 (GGGG…FPPP), and 233-255 (VSAN…DHLE). Composition is skewed to polar residues over residues 19–31 (SVST…SPSN) and 138–153 (QNGS…TSEN). Positions 179 to 189 (IHTERLSEPAR) are enriched in basic and acidic residues. The segment covering 233 to 248 (VSANTSTASPGPSSEG) has biased composition (low complexity). The segment at residues 307–319 (GRGRGRPKLIGDE) is a DNA-binding region (a.T hook). Residues 436 to 476 (LEGGSPPASSSSTATTSTATKTVKQESKNGHQNEENLNVKQ) are disordered. A compositionally biased stretch (low complexity) spans 443–455 (ASSSSTATTSTAT). Basic and acidic residues predominate over residues 458–469 (VKQESKNGHQNE).

This chain is AT hook-containing protein attf-4, found in Caenorhabditis elegans.